Here is a 93-residue protein sequence, read N- to C-terminus: Small ribosomal subunit protein uS19 (93 aa).

The protein belongs to the universal ribosomal protein uS19 family.

Protein S19 forms a complex with S13 that binds strongly to the 16S ribosomal RNA. The sequence is that of Small ribosomal subunit protein uS19 from Synechococcus sp. (strain JA-3-3Ab) (Cyanobacteria bacterium Yellowstone A-Prime).